Reading from the N-terminus, the 183-residue chain is Inosine/xanthosine triphosphatase (183 aa).

It belongs to the YjjX NTPase family. As to quaternary structure, homodimer. Mg(2+) is required as a cofactor. It depends on Mn(2+) as a cofactor.

The enzyme catalyses XTP + H2O = XDP + phosphate + H(+). The catalysed reaction is ITP + H2O = IDP + phosphate + H(+). Its function is as follows. Phosphatase that hydrolyzes non-canonical purine nucleotides such as XTP and ITP to their respective diphosphate derivatives. Probably excludes non-canonical purines from DNA/RNA precursor pool, thus preventing their incorporation into DNA/RNA and avoiding chromosomal lesions. This is Inosine/xanthosine triphosphatase from Vibrio cholerae serotype O1 (strain ATCC 39315 / El Tor Inaba N16961).